The following is a 128-amino-acid chain: Small ribosomal subunit protein uS9 (128 aa).

The segment covering 97 to 113 has biased composition (basic and acidic residues); it reads RSEGFMTRDSRSVERKK. The interval 97-128 is disordered; the sequence is RSEGFMTRDSRSVERKKPGQPKARRRFQFSKR. Basic residues predominate over residues 114 to 128; sequence PGQPKARRRFQFSKR.

Belongs to the universal ribosomal protein uS9 family.

This is Small ribosomal subunit protein uS9 from Phocaeicola vulgatus (strain ATCC 8482 / DSM 1447 / JCM 5826 / CCUG 4940 / NBRC 14291 / NCTC 11154) (Bacteroides vulgatus).